A 679-amino-acid polypeptide reads, in one-letter code: Sodium-dependent phosphate transporter 1 (679 aa).

6 helical membrane passes run 21-41 (YLWMLILGFIIAFVLAFSVGA), 62-82 (ACILASIFETVGSVLLGAKVS), 100-120 (GLLMAGSVSAMFGSAVWQLVA), 158-178 (IVMSWFVSPLLSGIMSGILFF), 203-223 (ACTVGINLFSIMYTGAPLLGF), and 230-250 (GTILISVGCAVFCALIVWFFV). Phosphoserine is present on residues Ser265 and Ser269. A disordered region spans residues 268-288 (ESPLMEKKNSLKEDHEETKLS). A compositionally biased stretch (basic and acidic residues) spans 271 to 286 (LMEKKNSLKEDHEETK). 4 helical membrane passes run 511-531 (VSLLFQFLQILTACFGSFAHG), 558-578 (VATPIWLLLYGGVGICIGLWV), 600-620 (FSIELASALTVVIASNIGLPI), and 650-670 (IFMAWFVTVPISGVISAAIMA). An a region spans residues 550 to 558 (DTGDVSSKV).

Belongs to the inorganic phosphate transporter (PiT) (TC 2.A.20) family.

It is found in the cell membrane. The catalysed reaction is 2 Na(+)(out) + phosphate(out) = 2 Na(+)(in) + phosphate(in). Its function is as follows. Sodium-phosphate symporter which preferentially transports the monovalent form of phosphate with a stoichiometry of two sodium ions per phosphate ion. May play a role in extracellular matrix and cartilage calcification as well as in vascular calcification. Essential for cell proliferation but this function is independent of its phosphate transporter activity. This is Sodium-dependent phosphate transporter 1 (SLC20A1) from Pongo abelii (Sumatran orangutan).